The following is a 301-amino-acid chain: Protein FdhE homolog (301 aa).

The protein belongs to the FdhE family.

The protein localises to the cytoplasm. Its function is as follows. Necessary for formate dehydrogenase activity. This chain is Protein FdhE homolog, found in Erwinia tasmaniensis (strain DSM 17950 / CFBP 7177 / CIP 109463 / NCPPB 4357 / Et1/99).